The sequence spans 328 residues: Protein chibby homolog 2 (328 aa).

Residues 180-231 (NKGASSVQKDTENTTAAGEGSLGPTCQEEHDAKEESTTPTQNDTKIAPSTED) are disordered. Residues 182–195 (GASSVQKDTENTTA) show a composition bias toward polar residues. Basic and acidic residues predominate over residues 206-215 (QEEHDAKEES). The stretch at 259–307 (RESLHALQDESKFFQEEYKKLKLQLNNVKNTVSDITTQMEMLEKELIAI) forms a coiled coil.

This sequence belongs to the chibby family. SPERT subfamily.

This Gallus gallus (Chicken) protein is Protein chibby homolog 2 (CBY2).